Reading from the N-terminus, the 217-residue chain is Probable transaldolase (217 aa).

Catalysis depends on Lys83, which acts as the Schiff-base intermediate with substrate.

Belongs to the transaldolase family. Type 3B subfamily.

The protein localises to the cytoplasm. It carries out the reaction D-sedoheptulose 7-phosphate + D-glyceraldehyde 3-phosphate = D-erythrose 4-phosphate + beta-D-fructose 6-phosphate. The protein operates within carbohydrate degradation; pentose phosphate pathway; D-glyceraldehyde 3-phosphate and beta-D-fructose 6-phosphate from D-ribose 5-phosphate and D-xylulose 5-phosphate (non-oxidative stage): step 2/3. Its function is as follows. Transaldolase is important for the balance of metabolites in the pentose-phosphate pathway. This chain is Probable transaldolase, found in Erythrobacter litoralis (strain HTCC2594).